A 50-amino-acid polypeptide reads, in one-letter code: Large ribosomal subunit protein bL33B (50 aa).

The protein belongs to the bacterial ribosomal protein bL33 family.

The sequence is that of Large ribosomal subunit protein bL33B from Mesomycoplasma hyopneumoniae (strain 7448) (Mycoplasma hyopneumoniae).